Reading from the N-terminus, the 314-residue chain is Olfactory receptor 52K1 (314 aa).

Over 1-27 the chain is Extracellular; it reads MLPSNITSTHPAVFLLVGIPGLEHLHA. The N-linked (GlcNAc...) asparagine glycan is linked to N5. The chain crosses the membrane as a helical span at residues 28–48; it reads WISIPFCFAYTLALLGNCTLL. The Cytoplasmic segment spans residues 49–56; the sequence is FIIQADAA. The chain crosses the membrane as a helical span at residues 57–77; that stretch reads LHEPMYLFLAMLATIDLVLSS. At 78 to 101 the chain is on the extracellular side; the sequence is TTLPKMLAIFWFRDQEINFFACLV. An intrachain disulfide couples C99 to C191. A helical transmembrane segment spans residues 102–122; the sequence is QMFFLHSFSIMESAVLLAMAF. Over 123–141 the chain is Cytoplasmic; sequence DRYVAICKPLHYTTVLTGS. Residues 142-162 traverse the membrane as a helical segment; sequence LITKIGMAAVARAVTLMTPLP. The Extracellular segment spans residues 163 to 198; it reads FLLRRFHYCRGPVIAHCYCEHMAVVRLACGDTSFNN. Residues 199 to 219 traverse the membrane as a helical segment; the sequence is IYGIAVAMFIVVLDLLFVILS. Residues 220-239 lie on the Cytoplasmic side of the membrane; the sequence is YVFILQAVLQLASQEARYKA. The helical transmembrane segment at 240–260 threads the bilayer; sequence FGTCVSHIGAILSTYTPVVIS. Residues 261–275 lie on the Extracellular side of the membrane; that stretch reads SVMHRVARHAAPRVH. The chain crosses the membrane as a helical span at residues 276-296; sequence ILLAIFYLLFPPMVNPIIYGV. Topologically, residues 297 to 314 are cytoplasmic; it reads KTKQIREYVLSLFQRKNM.

This sequence belongs to the G-protein coupled receptor 1 family.

The protein resides in the cell membrane. Odorant receptor. This chain is Olfactory receptor 52K1 (OR52K1), found in Homo sapiens (Human).